The chain runs to 270 residues: NAD kinase (270 aa).

Residue Asp-49 is the Proton acceptor of the active site. NAD(+) is bound by residues 49 to 50 (DG), Arg-54, 126 to 127 (NE), Arg-152, Asp-154, 165 to 170 (TAYNKS), Ala-189, and Gln-227.

It belongs to the NAD kinase family. Requires a divalent metal cation as cofactor.

The protein resides in the cytoplasm. The catalysed reaction is NAD(+) + ATP = ADP + NADP(+) + H(+). Its function is as follows. Involved in the regulation of the intracellular balance of NAD and NADP, and is a key enzyme in the biosynthesis of NADP. Catalyzes specifically the phosphorylation on 2'-hydroxyl of the adenosine moiety of NAD to yield NADP. This Lactococcus lactis subsp. lactis (strain IL1403) (Streptococcus lactis) protein is NAD kinase.